The primary structure comprises 382 residues: Galactokinase (382 aa).

Residue 34–37 participates in substrate binding; sequence EHTD. ATP is bound at residue 124–130; it reads GAGLSSS. Residues Ser-130 and Glu-162 each coordinate Mg(2+). Asp-174 (proton acceptor) is an active-site residue. Position 223 (Tyr-223) interacts with substrate.

The protein belongs to the GHMP kinase family. GalK subfamily.

Its subcellular location is the cytoplasm. The enzyme catalyses alpha-D-galactose + ATP = alpha-D-galactose 1-phosphate + ADP + H(+). It participates in carbohydrate metabolism; galactose metabolism. Its function is as follows. Catalyzes the transfer of the gamma-phosphate of ATP to D-galactose to form alpha-D-galactose-1-phosphate (Gal-1-P). The protein is Galactokinase of Salmonella choleraesuis (strain SC-B67).